We begin with the raw amino-acid sequence, 228 residues long: Ribulose-phosphate 3-epimerase (228 aa).

S9 contributes to the substrate binding site. Positions 34, 36, 68, and 177 each coordinate a divalent metal cation. The active-site Proton acceptor is the D36. Residues H68, 177–179 (DGG), and 199–200 (GS) each bind substrate. The active-site Proton donor is the D177.

Belongs to the ribulose-phosphate 3-epimerase family. The cofactor is a divalent metal cation.

It catalyses the reaction D-ribulose 5-phosphate = D-xylulose 5-phosphate. The protein operates within carbohydrate degradation. In terms of biological role, catalyzes the reversible epimerization of D-ribulose 5-phosphate to D-xylulose 5-phosphate. This chain is Ribulose-phosphate 3-epimerase, found in Buchnera aphidicola subsp. Schizaphis graminum (strain Sg).